The following is a 1622-amino-acid chain: ABC transporter C family member 1 (1622 aa).

9 consecutive transmembrane segments (helical) span residues 37–57, 73–93, 110–130, 145–165, 174–194, 336–356, 440–460, 527–547, and 557–577; these read FVLGISHLVLLILCLYRLWLI, FSYFLALLAAYATAEPLFRLV, EAFMLVLEAFAWGSALVMTVV, FAVIYALVGDMVLLNLVLSVK, YLYISEVAVQVAFGTLLFVYF, AWIGYIYAISIFVGVVLGVLC, VASIIGALFLVLMFPIQTVII, FILNSIPVLVTVVSFGVFSLL, and FTSLSLFSVLRFPLFMLPNII. One can recognise an ABC transmembrane type-1 1 domain in the interval 302–582; the sequence is FWWGGFWKIG…LPNIITQMVN (281 aa). The 225-residue stretch at 614-838 folds into the ABC transporter 1 domain; the sequence is ISIRNGYFSW…GPLFQRLMEN (225 aa). Residue 649-656 participates in ATP binding; sequence GSTGEGKT. The segment at 852–876 is disordered; the sequence is AEVDQTSVKPVENGNANNLQKDGIE. Polar residues predominate over residues 855-871; sequence DQTSVKPVENGNANNLQ. The next 6 membrane-spanning stretches (helical) occupy residues 909 to 929, 951 to 971, 1027 to 1049, 1053 to 1072, 1138 to 1158, and 1172 to 1192; these read ALGGAWVVMMLVICYVLTQVF, PLFYNIVYALLSFGQVSVTLI, AVFVNMFMGSIAQLLSTVILIGI, LSLWAIMPLLVVFYGAYLYY, LGIRLEVLGGLMVWLTASLAV, and STMGLLLSYALSITSSLTAVL. The ABC transmembrane type-1 2 domain maps to 916–1200; sequence VMMLVICYVL…VLRLASLAEN (285 aa). Residues 1231–1246 form an interaction with calmodulin and FKP42/TWD1 region; it reads WPSSGSIKFEDVVLRY. One can recognise an ABC transporter 2 domain in the interval 1237–1471; it reads IKFEDVVLRY…GESSFSKMVQ (235 aa). 1271–1278 contributes to the ATP binding site; it reads GRTGAGKS.

The protein belongs to the ABC transporter superfamily. ABCC family. Conjugate transporter (TC 3.A.1.208) subfamily. In terms of assembly, interacts with calmodulin (CaM), PAS1 and FKBP42/TWD1. Ubiquitous, with higher levels in leaves and stems and lower levels in roots. Localized in the root apex, root hair tips and root epidermis.

It is found in the vacuole membrane. The catalysed reaction is ATP + H2O + xenobioticSide 1 = ADP + phosphate + xenobioticSide 2.. Pump for glutathione S-conjugates. Mediates the transport of S-(2,4-dinitrophenyl)-glutathione (DNP-GS), GSSG, cyanidin 3-glucoside-GS (C3G-GS) and metolachlor-GS (MOC-GS). The sequence is that of ABC transporter C family member 1 (ABCC1) from Arabidopsis thaliana (Mouse-ear cress).